The following is a 411-amino-acid chain: Serine hydroxymethyltransferase (411 aa).

120-122 (GHL) provides a ligand contact to (6S)-5,6,7,8-tetrahydrofolate. Lysine 225 carries the N6-(pyridoxal phosphate)lysine modification. 350–352 (SPF) is a (6S)-5,6,7,8-tetrahydrofolate binding site.

The protein belongs to the SHMT family. Homodimer. Pyridoxal 5'-phosphate serves as cofactor.

It localises to the cytoplasm. It catalyses the reaction (6R)-5,10-methylene-5,6,7,8-tetrahydrofolate + glycine + H2O = (6S)-5,6,7,8-tetrahydrofolate + L-serine. The protein operates within one-carbon metabolism; tetrahydrofolate interconversion. It participates in amino-acid biosynthesis; glycine biosynthesis; glycine from L-serine: step 1/1. Catalyzes the reversible interconversion of serine and glycine with tetrahydrofolate (THF) serving as the one-carbon carrier. This reaction serves as the major source of one-carbon groups required for the biosynthesis of purines, thymidylate, methionine, and other important biomolecules. Also exhibits THF-independent aldolase activity toward beta-hydroxyamino acids, producing glycine and aldehydes, via a retro-aldol mechanism. The protein is Serine hydroxymethyltransferase of Lactobacillus gasseri (strain ATCC 33323 / DSM 20243 / BCRC 14619 / CIP 102991 / JCM 1131 / KCTC 3163 / NCIMB 11718 / NCTC 13722 / AM63).